We begin with the raw amino-acid sequence, 187 residues long: UPF0301 protein Shewmr7_1270 (187 aa).

Belongs to the UPF0301 (AlgH) family.

This chain is UPF0301 protein Shewmr7_1270, found in Shewanella sp. (strain MR-7).